The primary structure comprises 468 residues: Ubiquitin carboxyl-terminal hydrolase MINDY-1 (468 aa).

The span at methionine 1 to threonine 19 shows a compositional bias: polar residues. The interval methionine 1–arginine 105 is disordered. Residues serine 22–alanine 41 show a composition bias toward basic and acidic residues. Positions alanine 43–aspartate 54 are enriched in low complexity. The span at cysteine 68 to proline 80 shows a compositional bias: pro residues. Serine 103 is subject to Phosphoserine. The active-site Nucleophile is cysteine 137. Residue histidine 319 is the Proton acceptor of the active site. The tract at residues glutamine 388–glutamine 427 is ubiquitin-binding domain (UBD). Residues glutamate 423–glutamine 432 show a composition bias toward low complexity. Positions glutamate 423–leucine 468 are disordered. Residue serine 440 is modified to Phosphoserine. Basic and acidic residues predominate over residues alanine 452–leucine 468.

It belongs to the MINDY deubiquitinase family. FAM63 subfamily.

The enzyme catalyses Thiol-dependent hydrolysis of ester, thioester, amide, peptide and isopeptide bonds formed by the C-terminal Gly of ubiquitin (a 76-residue protein attached to proteins as an intracellular targeting signal).. Its function is as follows. Hydrolase that can specifically remove 'Lys-48'-linked conjugated ubiquitin from proteins. Has exodeubiquitinase activity and has a preference for long polyubiquitin chains. May play a regulatory role at the level of protein turnover. The sequence is that of Ubiquitin carboxyl-terminal hydrolase MINDY-1 (Mindy1) from Mus musculus (Mouse).